Here is a 200-residue protein sequence, read N- to C-terminus: Membrane-spanning 4-domains subfamily A member 5 (200 aa).

The Cytoplasmic segment spans residues 1–52 (MDSSTAHSPVFLVFPPEITASEYESTELSATTFSTQSPLQKLFARKMKILGT). Residues 53-73 (IQILFGIMTFSFGVIFLFTLL) form a helical membrane-spanning segment. Residues 74–80 (KPYPRFP) lie on the Extracellular side of the membrane. Residues 81–101 (FIFLSGYPFWGSVLFINSGAF) form a helical membrane-spanning segment. Topologically, residues 102 to 120 (LIAVKRKTTETLIILSRIM) are cytoplasmic. The helical transmembrane segment at 121-141 (NFLSALGAIAGIILLTFGFIL) threads the bilayer. Over 142–159 (DQNYICGYSHQNSQCKAV) the chain is Extracellular. Residues 160–180 (TVLFLGILITLMTFSIIELFI) form a helical membrane-spanning segment. Residues 181 to 200 (SLPFSILGCHSEDCDCEQCC) are Cytoplasmic-facing.

The protein belongs to the MS4A family. As to expression, expressed at high level in the testis. Detected also in the pancreas, heart and in the brain.

It localises to the membrane. May be involved in signal transduction as a component of a multimeric receptor complex. In Homo sapiens (Human), this protein is Membrane-spanning 4-domains subfamily A member 5 (MS4A5).